The chain runs to 252 residues: 5-oxoprolinase subunit A 1 (252 aa).

This sequence belongs to the LamB/PxpA family. In terms of assembly, forms a complex composed of PxpA, PxpB and PxpC.

The enzyme catalyses 5-oxo-L-proline + ATP + 2 H2O = L-glutamate + ADP + phosphate + H(+). Catalyzes the cleavage of 5-oxoproline to form L-glutamate coupled to the hydrolysis of ATP to ADP and inorganic phosphate. This chain is 5-oxoprolinase subunit A 1, found in Pseudomonas aeruginosa (strain ATCC 15692 / DSM 22644 / CIP 104116 / JCM 14847 / LMG 12228 / 1C / PRS 101 / PAO1).